Consider the following 479-residue polypeptide: Probable polyamine transporter At3g19553 (479 aa).

Helical transmembrane passes span 22–42, 53–73, 86–106, 130–150, 160–180, 236–256, 275–295, 304–324, 332–352, 355–375, 395–415, and 420–440; these read LTLLPLVFLIFYEVSGGPFGV, LLALLGFLIFPLIWSIPEALV, GYVVWISSAFGPFWGFQEGFW, FPVLDHVAARVPALLVITFSL, IVGFSAVVLAVFSLCPFVVMA, ALFGAVLLVMGSYLIPLMAGT, VGMLIGGVWLKGWIQAAAAMS, MSSDAFQLLGMSEIGMLPAFF, TPTISILCSATGVIFLSWMSF, IIEFLNFLYALGMLLEFAAFV, FGVSMLCLPPSLLVILVMVLA, and FLISGVIIVLGFCLYPFLTLV. The segment at 454–479 is disordered; sequence RPVSGVSSESQLDEEHGDESAASLLP.

This sequence belongs to the amino acid-polyamine-organocation (APC) superfamily. Polyamine:cation symporter (PHS) (TC 2.A.3.12) family.

It is found in the cell membrane. Its function is as follows. Probable cell membrane polyamine/proton symporter involved in the polyamine uptake in cells. This Arabidopsis thaliana (Mouse-ear cress) protein is Probable polyamine transporter At3g19553.